Here is a 298-residue protein sequence, read N- to C-terminus: Transcription factor RAX2 (298 aa).

HTH myb-type domains are found at residues 9-62 and 63-117; these read KANV…LNYL and RPNI…KKKL. DNA-binding regions (H-T-H motif) lie at residues 38–62 and 90–113; these read WIAL…LNYL and WSVI…NTKL.

Ubiquitous, with higher levels in roots, flowers, and shoot tips. Found in all cells of the shoot tips.

The protein localises to the nucleus. Functionally, transcription activator. Positively regulates axillary meristems (AMs) formation and development, especially during inflorescence. This is Transcription factor RAX2 (RAX2) from Arabidopsis thaliana (Mouse-ear cress).